Reading from the N-terminus, the 385-residue chain is Lipid-A-disaccharide synthase 2 (385 aa).

Belongs to the LpxB family.

The catalysed reaction is a lipid X + a UDP-2-N,3-O-bis[(3R)-3-hydroxyacyl]-alpha-D-glucosamine = a lipid A disaccharide + UDP + H(+). It functions in the pathway bacterial outer membrane biogenesis; LPS lipid A biosynthesis. In terms of biological role, condensation of UDP-2,3-diacylglucosamine and 2,3-diacylglucosamine-1-phosphate to form lipid A disaccharide, a precursor of lipid A, a phosphorylated glycolipid that anchors the lipopolysaccharide to the outer membrane of the cell. The polypeptide is Lipid-A-disaccharide synthase 2 (Legionella pneumophila subsp. pneumophila (strain Philadelphia 1 / ATCC 33152 / DSM 7513)).